A 513-amino-acid polypeptide reads, in one-letter code: GMP synthase [glutamine-hydrolyzing] (513 aa).

In terms of domain architecture, Glutamine amidotransferase type-1 spans Thr3–Asn192. Cys80 functions as the Nucleophile in the catalytic mechanism. Active-site residues include His166 and Glu168. The region spanning Trp193 to Arg388 is the GMPS ATP-PPase domain. Residue Ser220–Ser226 coordinates ATP.

As to quaternary structure, homodimer.

It carries out the reaction XMP + L-glutamine + ATP + H2O = GMP + L-glutamate + AMP + diphosphate + 2 H(+). The protein operates within purine metabolism; GMP biosynthesis; GMP from XMP (L-Gln route): step 1/1. Catalyzes the synthesis of GMP from XMP. The chain is GMP synthase [glutamine-hydrolyzing] from Thermosipho melanesiensis (strain DSM 12029 / CIP 104789 / BI429).